The primary structure comprises 1806 residues: SH3 and multiple ankyrin repeat domains protein 3 (1806 aa).

The interval 76 to 150 (MDGPGASAVV…KFLDEERLLQ (75 aa)) is intramolecular interaction with the ANK repeats. Tyr197 is modified (phosphotyrosine). 6 ANK repeats span residues 223 to 253 (SGEC…HLDF), 257 to 286 (DGLT…SPDY), 290 to 320 (RGLT…QLGI), 324 to 353 (NGWQ…DMGA), 357 to 386 (SGNT…NRDV), and 390 to 420 (NSQT…DVVP). Positions 407–416 (AEVIKTHKDS) are enriched in basic and acidic residues. Residues 407–467 (AEVIKTHKDS…AQPAASPGPS (61 aa)) are disordered. Pro residues predominate over residues 439–461 (LASPRPLQRSASDINLKGEAQPA). 5 positions are modified to phosphoserine: Ser448, Ser450, Ser463, Ser470, and Ser558. One can recognise an SH3 domain in the interval 546 to 605 (VPGRKFIAVKAHSPQGEGEIPLHRGEAVKVLSIGEGGFWEGTVKGRTGWFPADCVEEVQM). Phosphotyrosine is present on Tyr631. One can recognise a PDZ domain in the interval 646-740 (VAVLQKRDHE…RLVMKVVSVT (95 aa)). Disordered stretches follow at residues 665–689 (KAET…ESVD) and 760–853 (PSTT…KGIP). The required for interaction with ABI1 stretch occupies residues 753-760 (PPPPKRAP). Phosphoserine is present on Ser770. Pro residues predominate over residues 813-845 (ATVKQRPTSRRITPAEISSLFERQGLPGPEKLP). Phosphoserine occurs at positions 857, 866, and 877. Residues 871 to 1021 (RFPRSTSMQD…FSASLFAPSK (151 aa)) are disordered. Pro residues predominate over residues 906–915 (DSGPPPAFSP). Phosphoserine is present on residues Ser966 and Ser973. Thr988 is subject to Phosphothreonine. Residues 993 to 1013 (PKRRPRPPGPDSPYANLGAFS) are compositionally biased toward gly residues. Position 1006 is a phosphotyrosine (Tyr1006). Arg1041 bears the Asymmetric dimethylarginine mark. Residues 1115–1124 (PGADLPSLQP) are compositionally biased toward low complexity. Disordered stretches follow at residues 1115 to 1460 (PGAD…MSTL), 1475 to 1525 (ADGH…HHAA), and 1546 to 1584 (SKLW…KDTR). Over residues 1173-1193 (TGKPLDPSSPLALALAARERA) the composition is skewed to basic and acidic residues. At Thr1204 the chain carries Phosphothreonine. 4 positions are modified to phosphoserine: Ser1208, Ser1233, Ser1237, and Ser1240. Pro residues predominate over residues 1251–1261 (EAEKVPREERK). A Phosphothreonine modification is found at Thr1309. Ser1328 carries the post-translational modification Phosphoserine. Positions 1360–1370 (LPPAQLSSSDE) are enriched in basic and acidic residues. 2 stretches are compositionally biased toward low complexity: residues 1371–1392 (ETRE…ANGV) and 1444–1460 (HLET…MSTL). The SH3-binding signature appears at 1485-1491 (PPVPPKP). Ser1495 is subject to Phosphoserine. A compositionally biased stretch (polar residues) spans 1495-1505 (SPLGKGPVTFR). Residues 1569–1589 (ISELSSRLQQLNKDTRSLGEE) are a coiled coil. Ser1585, Ser1596, Ser1604, and Ser1614 each carry phosphoserine. The span at 1627-1637 (PGGPGGGASYS) shows a compositional bias: low complexity. The disordered stretch occupies residues 1627 to 1664 (PGGPGGGASYSVRPSGRYPVARRAPSPVKPASLERVEG). Residues 1638-1657 (VRPSGRYPVARRAPSPVKPA) are compositionally biased toward pro residues. Phosphoserine occurs at positions 1709, 1711, and 1713. The region spanning 1743–1806 (WSKFDVGDWL…ERALRQLDGS (64 aa)) is the SAM domain.

May homomultimerize via its SAM domain. Interacts with BAIAP2, DBNL and SLC17A7/VGLUT1. Interacts with DLGAP1/GKAP, GRM1/MGLUR1, GRM5/MGLUR5 and LZTS3 C-termini via its PDZ domain. Interacts with ABI1, HOMER1, HOMER2, HOMER3 and CTTN/cortactin SH3 domain. Is part of a complex with DLG4/PSD-95 and DLGAP1/GKAP. Interacts (via PDZ domain) with the GRIA1 subunit of the AMPA receptor (via PDZ-binding motif). Interacts with WASF1 and CYFIP2; the interactions mediate the association of SHANK3 with the WAVE1 complex. Interacts with ARPC2; the interaction probably mediates the association of SHANK3 with the Arp2/3 complex. Interacts (via ANK repeats) with SHARPIN and SPTAN1. Interacts (via PDZ domain) with ARHGAP44 (probably via PDZ-binding motif); the interaction takes place in dendritic spines and promotes GRIA1 exocytosis. Interacts with CAMK2A. Interacts with DIP2A. Interacts with ADGRL3. In terms of tissue distribution, expressed in the cerebral cortex and the cerebellum.

The protein resides in the cytoplasm. Its subcellular location is the postsynaptic density. It is found in the cell projection. The protein localises to the dendritic spine. In terms of biological role, major scaffold postsynaptic density protein which interacts with multiple proteins and complexes to orchestrate the dendritic spine and synapse formation, maturation and maintenance. Interconnects receptors of the postsynaptic membrane including NMDA-type and metabotropic glutamate receptors via complexes with GKAP/PSD-95 and HOMER, respectively, and the actin-based cytoskeleton. Plays a role in the structural and functional organization of the dendritic spine and synaptic junction through the interaction with Arp2/3 and WAVE1 complex as well as the promotion of the F-actin clusters. By way of this control of actin dynamics, participates in the regulation of developing neurons growth cone motility and the NMDA receptor-signaling. Also modulates GRIA1 exocytosis and GRM5/MGLUR5 expression and signaling to control the AMPA and metabotropic glutamate receptor-mediated synaptic transmission and plasticity. May be required at an early stage of synapse formation and be inhibited by IGF1 to promote synapse maturation. This is SH3 and multiple ankyrin repeat domains protein 3 (SHANK3) from Homo sapiens (Human).